The following is a 443-amino-acid chain: UDP-N-acetylmuramate--L-alanine ligase (443 aa).

110 to 116 is an ATP binding site; it reads GAHGKTS.

It belongs to the MurCDEF family.

The protein resides in the cytoplasm. It catalyses the reaction UDP-N-acetyl-alpha-D-muramate + L-alanine + ATP = UDP-N-acetyl-alpha-D-muramoyl-L-alanine + ADP + phosphate + H(+). Its pathway is cell wall biogenesis; peptidoglycan biosynthesis. Its function is as follows. Cell wall formation. The chain is UDP-N-acetylmuramate--L-alanine ligase from Lactococcus lactis subsp. cremoris (strain MG1363).